Reading from the N-terminus, the 332-residue chain is Ketol-acid reductoisomerase (NADP(+)) 1 (332 aa).

The 181-residue stretch at 2-182 (AELFYDADAD…GGTRAGVIKT (181 aa)) folds into the KARI N-terminal Rossmann domain. NADP(+) is bound by residues 25-28 (YGSQ), Ser51, Ser53, and 83-86 (DPIQ). His108 is an active-site residue. An NADP(+)-binding site is contributed by Gly134. The KARI C-terminal knotted domain occupies 183–328 (TFTEETETDL…KELRKLMSWV (146 aa)). Asp191, Glu195, Glu227, and Glu231 together coordinate Mg(2+). Ser252 provides a ligand contact to substrate.

Belongs to the ketol-acid reductoisomerase family. The cofactor is Mg(2+).

The enzyme catalyses (2R)-2,3-dihydroxy-3-methylbutanoate + NADP(+) = (2S)-2-acetolactate + NADPH + H(+). The catalysed reaction is (2R,3R)-2,3-dihydroxy-3-methylpentanoate + NADP(+) = (S)-2-ethyl-2-hydroxy-3-oxobutanoate + NADPH + H(+). The protein operates within amino-acid biosynthesis; L-isoleucine biosynthesis; L-isoleucine from 2-oxobutanoate: step 2/4. It functions in the pathway amino-acid biosynthesis; L-valine biosynthesis; L-valine from pyruvate: step 2/4. In terms of biological role, involved in the biosynthesis of branched-chain amino acids (BCAA). Catalyzes an alkyl-migration followed by a ketol-acid reduction of (S)-2-acetolactate (S2AL) to yield (R)-2,3-dihydroxy-isovalerate. In the isomerase reaction, S2AL is rearranged via a Mg-dependent methyl migration to produce 3-hydroxy-3-methyl-2-ketobutyrate (HMKB). In the reductase reaction, this 2-ketoacid undergoes a metal-dependent reduction by NADPH to yield (R)-2,3-dihydroxy-isovalerate. The chain is Ketol-acid reductoisomerase (NADP(+)) 1 from Streptomyces coelicolor (strain ATCC BAA-471 / A3(2) / M145).